We begin with the raw amino-acid sequence, 162 residues long: uncharacterized protein (162 aa).

Residues Asp-129–Gly-161 are a coiled coil.

This is an uncharacterized protein from Aquifex aeolicus (strain VF5).